Reading from the N-terminus, the 355-residue chain is Meiotic coiled-coil protein 4 (355 aa).

The stretch at 298-338 (QRLSRTEINKEIIEIEKLELEVVQFQMSIANLINTQVEVTN) forms a coiled coil.

Its subcellular location is the cytoplasm. Functionally, has a role in meiosis. The polypeptide is Meiotic coiled-coil protein 4 (mcp4) (Schizosaccharomyces pombe (strain 972 / ATCC 24843) (Fission yeast)).